The chain runs to 260 residues: uncharacterized protein (260 aa).

The first 22 residues, 1-22, serve as a signal peptide directing secretion; sequence MKHSKKLLLCISFLLITIFISG. Cys23 carries the N-palmitoyl cysteine lipid modification. Cys23 carries S-diacylglycerol cysteine lipidation.

This sequence belongs to the staphylococcal tandem lipoprotein family.

Its subcellular location is the cell membrane. This is an uncharacterized protein from Staphylococcus epidermidis (strain ATCC 35984 / DSM 28319 / BCRC 17069 / CCUG 31568 / BM 3577 / RP62A).